The chain runs to 332 residues: Potassium channel subfamily K member 17 (332 aa).

Residues 1–20 (MYRPRARAAPEGRVRGCAVP) lie on the Cytoplasmic side of the membrane. A helical transmembrane segment spans residues 21-43 (STVLLLLAYLAYLALGTGVFWTL). N-linked (GlcNAc...) asparagine glycosylation is found at asparagine 65 and asparagine 94. The pore-forming intramembrane region spans 106 to 124 (SFFFSVSTITTIGYGNLSP). Residues threonine 116, isoleucine 117, glycine 118, and tyrosine 119 each contribute to the K(+) site. Residues 116 to 121 (TIGYGN) are selectivity filter 1. The helical transmembrane segment at 128-148 (AARLFCIFFALVGIPLNLVVL) threads the bilayer. Residues 149–179 (NRLGHLMQQGVNHWASRLGGTWQDPDKARWL) lie on the Cytoplasmic side of the membrane. A helical membrane pass occupies residues 180 to 200 (AGSGALLSGLLLFLLLPPLLF). An intramembrane region (pore-forming) is located at residues 211–230 (GFYFAFITLSTVGFGDYVIG). K(+) is bound by residues threonine 221, valine 222, glycine 223, and phenylalanine 224. The selectivity filter 2 stretch occupies residues 221 to 226 (TVGFGD). The helical transmembrane segment at 244–264 (MVSLWILFGMAWLALIIKLIL) threads the bilayer. The Cytoplasmic portion of the chain corresponds to 265–332 (SQLETPGRVC…AHAAGCGKDS (68 aa)). The disordered stretch occupies residues 287–312 (SQSWRQGPDREPESHSPQQGCYPEGP).

The protein belongs to the two pore domain potassium channel (TC 1.A.1.8) family. In terms of assembly, homodimer; disulfide-linked. Heterodimer with KCNK5 and KCNK16. In terms of tissue distribution, widely expressed. Highly expressed in aorta and coronary artery. Expressed in pancreas, in both endocrine (alpha, beta, gamma, delta, and epsilon) and exocrine (acinar and ductal) cells.

The protein resides in the cell membrane. It catalyses the reaction K(+)(in) = K(+)(out). It carries out the reaction Rb(+)(in) = Rb(+)(out). The catalysed reaction is Cs(+)(in) = Cs(+)(out). Its activity is regulated as follows. Inhibited by Ba(2+), quinidine, chloroform and halothane. Activated at alkaline pH. Activated by quinine and isoflurane. Functionally, k(+) channel that conducts voltage-dependent outward rectifying currents upon membrane depolarization. Voltage sensing is coupled to K(+) electrochemical gradient in an 'ion flux gating' mode where outward but not inward ion flow opens the gate. Homo- and heterodimerizes to form functional channels with distinct regulatory and gating properties. Present in the cardiac conduction system where it may regulate action potential duration and beating frequency of cardiac myocytes. Permeable to other monovalent cations such as Rb(+) and Cs(+). The polypeptide is Potassium channel subfamily K member 17 (Homo sapiens (Human)).